Reading from the N-terminus, the 766-residue chain is Phosphoribosylformylglycinamidine synthase subunit PurL (766 aa).

H46 is an active-site residue. ATP contacts are provided by Y49 and K88. A Mg(2+)-binding site is contributed by E90. Substrate-binding positions include 91 to 94 (SHNH) and R113. H92 (proton acceptor) is an active-site residue. Position 114 (D114) interacts with Mg(2+). Position 237 (Q237) interacts with substrate. A Mg(2+)-binding site is contributed by D265. A substrate-binding site is contributed by 309-311 (ESQ). Positions 520 and 557 each coordinate ATP. N558 serves as a coordination point for Mg(2+). S560 contributes to the substrate binding site.

It belongs to the FGAMS family. In terms of assembly, monomer. Part of the FGAM synthase complex composed of 1 PurL, 1 PurQ and 2 PurS subunits.

It localises to the cytoplasm. It carries out the reaction N(2)-formyl-N(1)-(5-phospho-beta-D-ribosyl)glycinamide + L-glutamine + ATP + H2O = 2-formamido-N(1)-(5-O-phospho-beta-D-ribosyl)acetamidine + L-glutamate + ADP + phosphate + H(+). It functions in the pathway purine metabolism; IMP biosynthesis via de novo pathway; 5-amino-1-(5-phospho-D-ribosyl)imidazole from N(2)-formyl-N(1)-(5-phospho-D-ribosyl)glycinamide: step 1/2. Functionally, part of the phosphoribosylformylglycinamidine synthase complex involved in the purines biosynthetic pathway. Catalyzes the ATP-dependent conversion of formylglycinamide ribonucleotide (FGAR) and glutamine to yield formylglycinamidine ribonucleotide (FGAM) and glutamate. The FGAM synthase complex is composed of three subunits. PurQ produces an ammonia molecule by converting glutamine to glutamate. PurL transfers the ammonia molecule to FGAR to form FGAM in an ATP-dependent manner. PurS interacts with PurQ and PurL and is thought to assist in the transfer of the ammonia molecule from PurQ to PurL. This Synechococcus sp. (strain JA-3-3Ab) (Cyanobacteria bacterium Yellowstone A-Prime) protein is Phosphoribosylformylglycinamidine synthase subunit PurL.